The chain runs to 118 residues: MPRVKGGTVTRQRRKKIMKLAKGYRGAKHMQFKAASTQLFVSYKYAFRDRRRRKSDFRKLWIARINAAARQNDISYSKLMHGLKLAGVDMNRKMLADIAYNDSKTFAQLADTAKKALN.

The protein belongs to the bacterial ribosomal protein bL20 family.

Its function is as follows. Binds directly to 23S ribosomal RNA and is necessary for the in vitro assembly process of the 50S ribosomal subunit. It is not involved in the protein synthesizing functions of that subunit. The protein is Large ribosomal subunit protein bL20 of Lactobacillus acidophilus (strain ATCC 700396 / NCK56 / N2 / NCFM).